Reading from the N-terminus, the 170-residue chain is Adenine phosphoribosyltransferase (170 aa).

Belongs to the purine/pyrimidine phosphoribosyltransferase family. Homodimer.

The protein resides in the cytoplasm. It catalyses the reaction AMP + diphosphate = 5-phospho-alpha-D-ribose 1-diphosphate + adenine. It participates in purine metabolism; AMP biosynthesis via salvage pathway; AMP from adenine: step 1/1. Its function is as follows. Catalyzes a salvage reaction resulting in the formation of AMP, that is energically less costly than de novo synthesis. The sequence is that of Adenine phosphoribosyltransferase from Lactococcus lactis subsp. lactis (strain IL1403) (Streptococcus lactis).